A 204-amino-acid chain; its full sequence is Imidazoleglycerol-phosphate dehydratase (204 aa).

Belongs to the imidazoleglycerol-phosphate dehydratase family.

It localises to the cytoplasm. It carries out the reaction D-erythro-1-(imidazol-4-yl)glycerol 3-phosphate = 3-(imidazol-4-yl)-2-oxopropyl phosphate + H2O. Its pathway is amino-acid biosynthesis; L-histidine biosynthesis; L-histidine from 5-phospho-alpha-D-ribose 1-diphosphate: step 6/9. In Corynebacterium jeikeium (strain K411), this protein is Imidazoleglycerol-phosphate dehydratase.